Here is a 348-residue protein sequence, read N- to C-terminus: Anthranilate phosphoribosyltransferase (348 aa).

5-phospho-alpha-D-ribose 1-diphosphate contacts are provided by residues Gly89, 92–93 (GD), Thr97, 99–102 (NIST), 117–125 (KHGNRSVSS), and Ser129. Gly89 is an anthranilate binding site. Residue Ser101 participates in Mg(2+) binding. Residue Asn120 participates in anthranilate binding. Position 175 (Arg175) interacts with anthranilate. Residues Asp233 and Glu234 each coordinate Mg(2+).

Belongs to the anthranilate phosphoribosyltransferase family. Homodimer. Requires Mg(2+) as cofactor.

It carries out the reaction N-(5-phospho-beta-D-ribosyl)anthranilate + diphosphate = 5-phospho-alpha-D-ribose 1-diphosphate + anthranilate. It participates in amino-acid biosynthesis; L-tryptophan biosynthesis; L-tryptophan from chorismate: step 2/5. In terms of biological role, catalyzes the transfer of the phosphoribosyl group of 5-phosphorylribose-1-pyrophosphate (PRPP) to anthranilate to yield N-(5'-phosphoribosyl)-anthranilate (PRA). This is Anthranilate phosphoribosyltransferase from Shewanella putrefaciens (strain CN-32 / ATCC BAA-453).